We begin with the raw amino-acid sequence, 162 residues long: Large ribosomal subunit protein uL15 (162 aa).

Residues 1-44 (MKLNELRDNPGATKNRIRVGRGIGSGKGKTAGRGVKGQKSREGV) form a disordered region. A compositionally biased stretch (gly residues) spans 21 to 35 (RGIGSGKGKTAGRGV).

This sequence belongs to the universal ribosomal protein uL15 family. In terms of assembly, part of the 50S ribosomal subunit.

In terms of biological role, binds to the 23S rRNA. The protein is Large ribosomal subunit protein uL15 of Rhodospirillum rubrum (strain ATCC 11170 / ATH 1.1.1 / DSM 467 / LMG 4362 / NCIMB 8255 / S1).